Consider the following 368-residue polypeptide: Quinolinate synthase (368 aa).

Histidine 46 and serine 63 together coordinate iminosuccinate. Cysteine 110 contacts [4Fe-4S] cluster. Iminosuccinate contacts are provided by residues tyrosine 141–asparagine 143 and serine 162. Cysteine 230 serves as a coordination point for [4Fe-4S] cluster. Iminosuccinate-binding positions include histidine 256–glutamate 258 and threonine 273. [4Fe-4S] cluster is bound at residue cysteine 320.

Belongs to the quinolinate synthase family. Type 3 subfamily. Requires [4Fe-4S] cluster as cofactor.

Its subcellular location is the cytoplasm. It catalyses the reaction iminosuccinate + dihydroxyacetone phosphate = quinolinate + phosphate + 2 H2O + H(+). It functions in the pathway cofactor biosynthesis; NAD(+) biosynthesis; quinolinate from iminoaspartate: step 1/1. Functionally, catalyzes the condensation of iminoaspartate with dihydroxyacetone phosphate to form quinolinate. The protein is Quinolinate synthase of Bacillus mycoides (strain KBAB4) (Bacillus weihenstephanensis).